Here is a 271-residue protein sequence, read N- to C-terminus: Hydroxyethylthiazole kinase (271 aa).

Met45 lines the substrate pocket. Residues Arg121 and Thr168 each contribute to the ATP site. Residue Gly195 participates in substrate binding.

Belongs to the Thz kinase family. Mg(2+) is required as a cofactor.

It carries out the reaction 5-(2-hydroxyethyl)-4-methylthiazole + ATP = 4-methyl-5-(2-phosphooxyethyl)-thiazole + ADP + H(+). It functions in the pathway cofactor biosynthesis; thiamine diphosphate biosynthesis; 4-methyl-5-(2-phosphoethyl)-thiazole from 5-(2-hydroxyethyl)-4-methylthiazole: step 1/1. Catalyzes the phosphorylation of the hydroxyl group of 4-methyl-5-beta-hydroxyethylthiazole (THZ). This is Hydroxyethylthiazole kinase from Bacillus pumilus (strain SAFR-032).